The following is a 575-amino-acid chain: Phosphoenolpyruvate-protein phosphotransferase (575 aa).

H189 acts as the Tele-phosphohistidine intermediate in catalysis. Phosphoenolpyruvate contacts are provided by R296 and R332. Mg(2+)-binding residues include E431 and D455. Phosphoenolpyruvate contacts are provided by residues 454–455 and R465; that span reads ND. Catalysis depends on C502, which acts as the Proton donor.

This sequence belongs to the PEP-utilizing enzyme family. Homodimer. Requires Mg(2+) as cofactor.

It localises to the cytoplasm. It catalyses the reaction L-histidyl-[protein] + phosphoenolpyruvate = N(pros)-phospho-L-histidyl-[protein] + pyruvate. General (non sugar-specific) component of the phosphoenolpyruvate-dependent sugar phosphotransferase system (sugar PTS). This major carbohydrate active-transport system catalyzes the phosphorylation of incoming sugar substrates concomitantly with their translocation across the cell membrane. Enzyme I transfers the phosphoryl group from phosphoenolpyruvate (PEP) to the phosphoryl carrier protein (HPr). The chain is Phosphoenolpyruvate-protein phosphotransferase (ptsI) from Haemophilus influenzae (strain ATCC 51907 / DSM 11121 / KW20 / Rd).